Reading from the N-terminus, the 214-residue chain is Ras-related protein Rab2BV (214 aa).

19–26 contributes to the GTP binding site; it reads GDSGVGKS. The short motif at 41–49 is the Effector region element; the sequence is SKSTIGVEF. GTP is bound by residues 67-71 and 125-128; these read DTAGQ and NKSD. Residues Cys211 and Cys212 are each lipidated (S-geranylgeranyl cysteine).

The protein belongs to the small GTPase superfamily. Rab family.

Its subcellular location is the cell membrane. This is Ras-related protein Rab2BV (RAB2BV) from Beta vulgaris (Sugar beet).